Consider the following 341-residue polypeptide: GTPase Obg (341 aa).

Residues 1–159 enclose the Obg domain; that stretch reads MKFLDQAKVY…RTLWLRLKLI (159 aa). Residues 160-327 enclose the OBG-type G domain; that stretch reads ADAGLIGLPN…MLRAGAHMIE (168 aa). GTP is bound by residues 166–173, 191–195, 212–215, 279–282, and 308–310; these read GLPNAGKS, FTTLY, DIPG, SQID, and SAV. The Mg(2+) site is built by serine 173 and threonine 193.

The protein belongs to the TRAFAC class OBG-HflX-like GTPase superfamily. OBG GTPase family. As to quaternary structure, monomer. Mg(2+) is required as a cofactor.

It is found in the cytoplasm. Its function is as follows. An essential GTPase which binds GTP, GDP and possibly (p)ppGpp with moderate affinity, with high nucleotide exchange rates and a fairly low GTP hydrolysis rate. Plays a role in control of the cell cycle, stress response, ribosome biogenesis and in those bacteria that undergo differentiation, in morphogenesis control. The chain is GTPase Obg from Bartonella quintana (strain Toulouse) (Rochalimaea quintana).